The following is a 130-amino-acid chain: Small ribosomal subunit protein uS11 (130 aa).

The protein belongs to the universal ribosomal protein uS11 family. As to quaternary structure, part of the 30S ribosomal subunit. Interacts with proteins S7 and S18. Binds to IF-3.

Functionally, located on the platform of the 30S subunit, it bridges several disparate RNA helices of the 16S rRNA. Forms part of the Shine-Dalgarno cleft in the 70S ribosome. This Thermotoga petrophila (strain ATCC BAA-488 / DSM 13995 / JCM 10881 / RKU-1) protein is Small ribosomal subunit protein uS11.